A 347-amino-acid polypeptide reads, in one-letter code: Palmitoyltransferase ZDHHC11 (347 aa).

The Cytoplasmic portion of the chain corresponds to Met-1–Ala-46. The helical transmembrane segment at Ile-47–Leu-67 threads the bilayer. Residues Pro-68–Ala-75 lie on the Lumenal side of the membrane. A helical membrane pass occupies residues Asn-76–Ile-96. The Cytoplasmic segment spans residues Asp-97–Tyr-170. In terms of domain architecture, DHHC spans Gln-128–Ala-178. Cys-158 functions as the S-palmitoyl cysteine intermediate in the catalytic mechanism. A helical membrane pass occupies residues Trp-171 to Leu-191. Residues Cys-192–Pro-234 lie on the Lumenal side of the membrane. A helical transmembrane segment spans residues Ile-235–Gly-255. Residues His-256–Asp-347 are Cytoplasmic-facing. Residues Glu-291–Asp-306 show a composition bias toward basic and acidic residues. The disordered stretch occupies residues Glu-291–Ser-332. Residues Phe-322–Ser-331 show a composition bias toward polar residues.

Belongs to the DHHC palmitoyltransferase family. In terms of assembly, interacts with IRF3 and STING1; in presence of DNA viruses recruits IRF3 to STING1 promoting IRF3 phosphorylation and activation.

The protein localises to the endosome membrane. It carries out the reaction L-cysteinyl-[protein] + hexadecanoyl-CoA = S-hexadecanoyl-L-cysteinyl-[protein] + CoA. Its function is as follows. Endoplasmic reticulum-localized palmitoyltransferase that could catalyze the addition of palmitate onto various protein substrates and be involved in a variety of cellular processes. Has a palmitoyltransferase activity toward NCDN and regulates NCDN association with endosome membranes through this palmitoylation. May play a role in cell proliferation. In terms of biological role, also has a palmitoyltransferase activity-independent function in DNA virus-triggered and CGAS-mediated innate immune response. Functions as an adapter that recruits IRF3 to STING1 to promote the activation of that key transcriptional regulator of type I interferon (IFN)-dependent immune response. This chain is Palmitoyltransferase ZDHHC11, found in Mus musculus (Mouse).